Consider the following 392-residue polypeptide: Protein FAM53C (392 aa).

Met-1 is subject to N-acetylmethionine. The interval 76 to 120 is disordered; it reads LHLRPPSPGSSPQEQSLSQVLSPEPPDPEKLPVPPAPPSKRHCRS. The segment covering 85-97 has biased composition (low complexity); it reads SSPQEQSLSQVLS. Ser-122 and Ser-162 each carry phosphoserine. Disordered stretches follow at residues 141–167 and 201–294; these read LWTPIKHRGSGGGGGPQVPHQSPPKRV and DSSH…EDPR. Residues 201–215 are compositionally biased toward polar residues; it reads DSSHPSAASPQSGSW. 4 positions are modified to phosphoserine: Ser-232, Ser-234, Ser-255, and Ser-273. Residues 241 to 256 are compositionally biased toward low complexity; that stretch reads ASRFLPSARSSPASSP. Residues 278 to 294 show a composition bias toward basic and acidic residues; it reads LDARKAGVKRRHEEDPR. Position 299 is a phosphoserine (Ser-299).

The protein belongs to the FAM53 family.

The polypeptide is Protein FAM53C (Bos taurus (Bovine)).